A 41-amino-acid polypeptide reads, in one-letter code: Large ribosomal subunit protein bL36B (41 aa).

Belongs to the bacterial ribosomal protein bL36 family.

This is Large ribosomal subunit protein bL36B from Neisseria meningitidis serogroup C (strain 053442).